Reading from the N-terminus, the 383-residue chain is 1-deoxy-D-xylulose 5-phosphate reductoisomerase (383 aa).

8 residues coordinate NADPH: Thr10, Gly11, Ser12, Ile13, Gly36, Lys37, Asn38, and Asn122. Lys123 contacts 1-deoxy-D-xylulose 5-phosphate. Residue Glu124 coordinates NADPH. Residue Asp148 coordinates Mn(2+). Residues Ser149, Glu150, Ser174, and His197 each contribute to the 1-deoxy-D-xylulose 5-phosphate site. Position 150 (Glu150) interacts with Mn(2+). Position 203 (Gly203) interacts with NADPH. Residues Ser210, Asn215, Lys216, and Glu219 each coordinate 1-deoxy-D-xylulose 5-phosphate. Residue Glu219 coordinates Mn(2+).

It belongs to the DXR family. Mg(2+) serves as cofactor. Requires Mn(2+) as cofactor.

The catalysed reaction is 2-C-methyl-D-erythritol 4-phosphate + NADP(+) = 1-deoxy-D-xylulose 5-phosphate + NADPH + H(+). It functions in the pathway isoprenoid biosynthesis; isopentenyl diphosphate biosynthesis via DXP pathway; isopentenyl diphosphate from 1-deoxy-D-xylulose 5-phosphate: step 1/6. Functionally, catalyzes the NADPH-dependent rearrangement and reduction of 1-deoxy-D-xylulose-5-phosphate (DXP) to 2-C-methyl-D-erythritol 4-phosphate (MEP). This is 1-deoxy-D-xylulose 5-phosphate reductoisomerase from Bacillus licheniformis (strain ATCC 14580 / DSM 13 / JCM 2505 / CCUG 7422 / NBRC 12200 / NCIMB 9375 / NCTC 10341 / NRRL NRS-1264 / Gibson 46).